Consider the following 318-residue polypeptide: MRIKATVERLPGGMMLVPLLLGALCHTLWPQAGSTLGSFSNGLISGTVPILAVWFFCMGATIQLRASGRVLRRSGSLVLTKIAVAWLVAVLCAPLLPIGGVSSGPLAGLSVLALVAAMDMTNGGLYAALMQQYGSSEDAGAVVLMSLESGPLISMLILGASGLASFEPQLFVGAVLPLLLGFALGNLDAELRQFFAQATKTLVPFFGFALGNTLDLSTIAHTGTSGVLLGVAVVVITGLPLLLADRWIGGGNGTAGVAASSTAGAAVATPALIAGMAPQFAPAAPAATALVASAVIVTSLLVPLLTALYARRGDARSG.

10 helical membrane passes run 10 to 30 (LPGG…TLWP), 42 to 62 (GLIS…GATI), 82 to 102 (IAVA…GGVS), 109 to 129 (LSVL…YAAL), 139 to 159 (AGAV…LILG), 163 to 183 (LASF…LGFA), 201 to 221 (TLVP…TIAH), 224 to 244 (TSGV…LLLA), 257 to 277 (VAAS…AGMA), and 289 to 309 (ALVA…TALY).

It belongs to the KdgT transporter family.

It localises to the cell inner membrane. It catalyses the reaction 2-dehydro-3-deoxy-D-gluconate(in) + H(+)(in) = 2-dehydro-3-deoxy-D-gluconate(out) + H(+)(out). Catalyzes the proton-dependent uptake of 2-keto-3-deoxygluconate (KDG) into the cell. In Xanthomonas axonopodis pv. citri (strain 306), this protein is 2-keto-3-deoxygluconate permease.